Consider the following 1486-residue polypeptide: Chromosome partition protein MukB (1486 aa).

ATP is bound at residue 34-41; it reads GGNGAGKS. Coiled-coil stretches lie at residues 326–418, 444–480, and 509–603; these read LEAD…QYNQ, LETF…QAYQ, and RHLA…RAPV. The interval 666–783 is flexible hinge; that stretch reads PGGSEDQRLN…EVPLFGRAAR (118 aa). 3 coiled-coil regions span residues 835 to 923, 977 to 1115, and 1209 to 1266; these read EAEI…AKLE, EMLS…TAKA, and VEAI…QNVS.

Belongs to the SMC family. MukB subfamily. As to quaternary structure, homodimerization via its hinge domain. Binds to DNA via its C-terminal region. Interacts, and probably forms a ternary complex, with MukE and MukF via its C-terminal region. The complex formation is stimulated by calcium or magnesium. Interacts with tubulin-related protein FtsZ.

The protein localises to the cytoplasm. It localises to the nucleoid. In terms of biological role, plays a central role in chromosome condensation, segregation and cell cycle progression. Functions as a homodimer, which is essential for chromosome partition. Involved in negative DNA supercoiling in vivo, and by this means organize and compact chromosomes. May achieve or facilitate chromosome segregation by condensation DNA from both sides of a centrally located replisome during cell division. This is Chromosome partition protein MukB from Escherichia coli O17:K52:H18 (strain UMN026 / ExPEC).